Reading from the N-terminus, the 298-residue chain is Max-like protein X (298 aa).

The disordered stretch occupies residues 1 to 63 (MTEPGASPED…ARGCREDSSH (63 aa)). Phosphoserine is present on S7. Over residues 28–37 (GRARARRGSG) the composition is skewed to basic residues. A phosphoserine mark is found at S45, S48, S74, S77, and S98. Over residues 98–109 (SIGSTSASSVPN) the composition is skewed to polar residues. The segment at 98 to 119 (SIGSTSASSVPNTDDEDSDYQQ) is disordered. The region spanning 129–187 (RRRRAHTQAEQKRRDAIKRGYDDLQTIVPTCQQQDFSIGSQKLSKAIVLQKTIDYIQFL) is the bHLH domain. The segment at 194 to 214 (QEEEVSTLRKDVTALKIMKVN) is leucine-zipper.

Efficient DNA binding requires dimerization with another bHLH protein. Binds DNA as a heterodimer with MAD1, MAD4, MNT, WBSCR14 and MLXIP. Can also bind DNA as a homodimer. In terms of tissue distribution, expressed in all tissues examined: stomach, duodenum, jejunum, ileum, colon, liver, pancreas, salivary gland, kidney, spleen, lung, heart, skeletal muscle, brain, ovary and testis.

Its subcellular location is the cytoplasm. The protein resides in the nucleus. Transcription regulator. Forms a sequence-specific DNA-binding protein complex with MAD1, MAD4, MNT, WBSCR14 and MLXIP which recognizes the core sequence 5'-CACGTG-3'. The TCFL4-MAD1, TCFL4-MAD4, TCFL4-WBSCR14 complexes are transcriptional repressors. Plays a role in transcriptional activation of glycolytic target genes. Involved in glucose-responsive gene regulation. The polypeptide is Max-like protein X (Mlx) (Mus musculus (Mouse)).